Consider the following 287-residue polypeptide: Protease HtpX (287 aa).

The next 2 membrane-spanning stretches (helical) occupy residues 4-24 (IFLL…VMSI) and 33-53 (GGLL…SLAI). Histidine 139 is a Zn(2+) binding site. Residue glutamate 140 is part of the active site. Histidine 143 is a binding site for Zn(2+). Helical transmembrane passes span 154 to 174 (LIQG…ASII) and 195 to 215 (AVVF…VAYF). A Zn(2+)-binding site is contributed by glutamate 220.

The protein belongs to the peptidase M48B family. Zn(2+) serves as cofactor.

The protein localises to the cell inner membrane. In Shewanella loihica (strain ATCC BAA-1088 / PV-4), this protein is Protease HtpX.